The following is a 682-amino-acid chain: PWWP domain-containing DNA repair factor 3A (682 aa).

S105 is modified (phosphoserine). Positions 121–145 are disordered; it reads EKTDADVASQVSSAPSPSLLGEDGQ. The segment covering 127 to 140 has biased composition (low complexity); the sequence is VASQVSSAPSPSLL. Position 168 is a phosphoserine (S168). 2 disordered regions span residues 179–318 and 334–369; these read GPKT…GAAP and GAGD…EEEP. The segment covering 203-220 has biased composition (basic and acidic residues); that stretch reads HGQESTTKKRQRNLGEKP. Phosphoserine occurs at positions 345 and 346. The segment covering 346–357 has biased composition (polar residues); the sequence is SEESTGFKSTHS. Residues 383 to 444 enclose the PWWP domain; that stretch reads VGMLVWLKYQ…KHFDCKEKHA (62 aa).

Belongs to the PWWP3A family. As to quaternary structure, interacts with TP53BP1 (via BRCT domain); the interaction is not dependent on its phosphorylation status. Binds nucleosomes. Interacts with trimethylated 'Lys-36' of histone H3 (H3K36me3) (in vitro).

The protein resides in the nucleus. Functionally, involved in the DNA damage response pathway by contributing to the maintenance of chromatin architecture. Recruited to the vicinity of DNA breaks by TP53BP1 and plays an accessory role to facilitate damage-induced chromatin changes and promoting chromatin relaxation. Required for efficient DNA repair and cell survival following DNA damage. This is PWWP domain-containing DNA repair factor 3A (Pwwp3a) from Mus musculus (Mouse).